The following is a 234-amino-acid chain: Large ribosomal subunit protein uL1 (234 aa).

Belongs to the universal ribosomal protein uL1 family. In terms of assembly, part of the 50S ribosomal subunit.

Binds directly to 23S rRNA. The L1 stalk is quite mobile in the ribosome, and is involved in E site tRNA release. Functionally, protein L1 is also a translational repressor protein, it controls the translation of the L11 operon by binding to its mRNA. The sequence is that of Large ribosomal subunit protein uL1 from Helicobacter pylori (strain Shi470).